Here is a 266-residue protein sequence, read N- to C-terminus: Luciferase (266 aa).

Residues 22–41 (GLAVTCCAVAVASIIAFPYI) traverse the membrane as a helical segment.

This sequence belongs to the fungal luciferase family.

Its subcellular location is the membrane. The enzyme catalyses 3-hydroxyhispidin + O2 = (E)-caffeoylpyruvate + hnu + CO2. The catalysed reaction is 3-hydroxyhispidin + O2 = 4-[(E)-2-(3,4-dihydroxyphenyl)ethenyl]-1,7-dihydroxy-2,3,5-trioxabicyclo[2.2.2]oct-7-en-6-one. Luciferase; part of the gene cluster that mediates the fungal bioluminescence cycle. Uses the fungal luciferin 3-hydroxyhispidin as a substrate to produce an endoperoxide as a high-energy intermediate with decomposition that yields oxyluciferin (also known as caffeoylpyruvate) and light emission. The fungal bioluminescence cycle begins with the hispidin synthetase that catalyzes the formation of hispidin which is further hydroxylated by the hispidin-3-hydroxylase, yielding the fungal luciferin 3-hydroxyhispidin. The luciferase then produces an endoperoxide as a high-energy intermediate with decomposition that yields oxyluciferin and light emission. Oxyluciferin can be recycled to caffeic acid by caffeoylpyruvate hydrolase. The polypeptide is Luciferase (Armillaria mellea (Honey mushroom)).